A 161-amino-acid chain; its full sequence is Phosphopantetheine adenylyltransferase (161 aa).

A substrate-binding site is contributed by Ser11. ATP contacts are provided by residues 11–12 and His19; that span reads SF. Residues Lys43, Leu75, and Arg89 each contribute to the substrate site. ATP is bound by residues 90–92, Glu100, and 125–131; these read GLR and YSYLSSS.

This sequence belongs to the bacterial CoaD family. Homohexamer. Mg(2+) serves as cofactor.

The protein resides in the cytoplasm. The catalysed reaction is (R)-4'-phosphopantetheine + ATP + H(+) = 3'-dephospho-CoA + diphosphate. It participates in cofactor biosynthesis; coenzyme A biosynthesis; CoA from (R)-pantothenate: step 4/5. Reversibly transfers an adenylyl group from ATP to 4'-phosphopantetheine, yielding dephospho-CoA (dPCoA) and pyrophosphate. This chain is Phosphopantetheine adenylyltransferase, found in Citrifermentans bemidjiense (strain ATCC BAA-1014 / DSM 16622 / JCM 12645 / Bem) (Geobacter bemidjiensis).